The sequence spans 381 residues: Queuine tRNA-ribosyltransferase (381 aa).

The Proton acceptor role is filled by Asp-96. Substrate is bound by residues 96 to 100 (DSGGF), Asp-150, Gln-193, and Gly-220. The RNA binding stretch occupies residues 251–257 (GVGSPDS). Residue Asp-270 is the Nucleophile of the active site. The RNA binding; important for wobble base 34 recognition stretch occupies residues 275-279 (TRIAR). Residues Cys-308, Cys-310, Cys-313, and His-339 each contribute to the Zn(2+) site.

It belongs to the queuine tRNA-ribosyltransferase family. In terms of assembly, homodimer. Within each dimer, one monomer is responsible for RNA recognition and catalysis, while the other monomer binds to the replacement base PreQ1. Zn(2+) is required as a cofactor.

It catalyses the reaction 7-aminomethyl-7-carbaguanine + guanosine(34) in tRNA = 7-aminomethyl-7-carbaguanosine(34) in tRNA + guanine. Its pathway is tRNA modification; tRNA-queuosine biosynthesis. In terms of biological role, catalyzes the base-exchange of a guanine (G) residue with the queuine precursor 7-aminomethyl-7-deazaguanine (PreQ1) at position 34 (anticodon wobble position) in tRNAs with GU(N) anticodons (tRNA-Asp, -Asn, -His and -Tyr). Catalysis occurs through a double-displacement mechanism. The nucleophile active site attacks the C1' of nucleotide 34 to detach the guanine base from the RNA, forming a covalent enzyme-RNA intermediate. The proton acceptor active site deprotonates the incoming PreQ1, allowing a nucleophilic attack on the C1' of the ribose to form the product. After dissociation, two additional enzymatic reactions on the tRNA convert PreQ1 to queuine (Q), resulting in the hypermodified nucleoside queuosine (7-(((4,5-cis-dihydroxy-2-cyclopenten-1-yl)amino)methyl)-7-deazaguanosine). This chain is Queuine tRNA-ribosyltransferase, found in Bacillus licheniformis (strain ATCC 14580 / DSM 13 / JCM 2505 / CCUG 7422 / NBRC 12200 / NCIMB 9375 / NCTC 10341 / NRRL NRS-1264 / Gibson 46).